Consider the following 226-residue polypeptide: Cytidylate kinase (226 aa).

10–18 (GPASSGKST) is an ATP binding site.

This sequence belongs to the cytidylate kinase family. Type 1 subfamily.

The protein resides in the cytoplasm. The catalysed reaction is CMP + ATP = CDP + ADP. It carries out the reaction dCMP + ATP = dCDP + ADP. The sequence is that of Cytidylate kinase from Streptococcus equi subsp. equi (strain 4047).